Consider the following 606-residue polypeptide: Neutral/alkaline invertase 3, chloroplastic (606 aa).

A chloroplast-targeting transit peptide spans 1–58 (MGIAEVALHSMPGAFAAHSPASNLPLAADAARGRRRRSANSLHSSRALQGPVRFPGLR). The tract at residues 97–126 (RVPGQAVGGNGSVNGSAAKPPPQRRKASSV) is disordered.

The protein belongs to the glycosyl hydrolase 100 family.

The protein resides in the plastid. Its subcellular location is the chloroplast. It catalyses the reaction Hydrolysis of terminal non-reducing beta-D-fructofuranoside residues in beta-D-fructofuranosides.. Mitochondrial invertase that cleaves sucrose into glucose and fructose. The polypeptide is Neutral/alkaline invertase 3, chloroplastic (Oryza sativa subsp. japonica (Rice)).